Here is a 179-residue protein sequence, read N- to C-terminus: Replication restart protein DnaT (179 aa).

Residues 156–179 (GGLPKRDVNTVSEPDSQIPPGFRG) are disordered.

The protein belongs to the DnaT family. In terms of assembly, homooligomerizes. Interacts with PriB. Component of the replication restart primosome. Primosome assembly occurs via a 'hand-off' mechanism. PriA binds to replication forks, subsequently PriB then DnaT bind; DnaT then displaces ssDNA to generate the helicase loading substrate.

Involved in the restart of stalled replication forks, which reloads the replicative helicase on sites other than the origin of replication. Can function in multiple replication restart pathways. Displaces ssDNA from a PriB-ssDNA complex. Probably forms a spiral filament on ssDNA. This chain is Replication restart protein DnaT, found in Escherichia coli O1:K1 / APEC.